Consider the following 431-residue polypeptide: Isocitrate lyase (431 aa).

The segment at 1-21 (MSNVGTPRTAQEIQQDWDTNP) is disordered. Residue 93 to 95 (SGW) coordinates substrate. Position 155 (Asp-155) interacts with Mg(2+). The Proton acceptor role is filled by Cys-193. Residues 194 to 195 (GH), Arg-230, 315 to 319 (NCSPS), and Thr-349 contribute to the substrate site.

Belongs to the isocitrate lyase/PEP mutase superfamily. Isocitrate lyase family. As to quaternary structure, homotetramer. Mg(2+) serves as cofactor.

It catalyses the reaction D-threo-isocitrate = glyoxylate + succinate. It functions in the pathway carbohydrate metabolism; glyoxylate cycle; (S)-malate from isocitrate: step 1/2. Involved in the metabolic adaptation in response to environmental changes. Catalyzes the reversible formation of succinate and glyoxylate from isocitrate, a key step of the glyoxylate cycle, which operates as an anaplerotic route for replenishing the tricarboxylic acid cycle during growth on fatty acid substrates. The sequence is that of Isocitrate lyase (aceA) from Corynebacterium efficiens (strain DSM 44549 / YS-314 / AJ 12310 / JCM 11189 / NBRC 100395).